A 198-amino-acid polypeptide reads, in one-letter code: Endothelin-3 (198 aa).

A signal peptide spans Met-1–Ala-16. A propeptide spanning residues Ala-17–Ala-86 is cleaved from the precursor. A disordered region spans residues Cys-22–Gly-79. 2 disulfides stabilise this stretch: Cys-89–Cys-103 and Cys-91–Cys-99. Residues Ile-110 to Arg-198 constitute a propeptide that is removed on maturation. The segment at Cys-150–Cys-164 is endothelin-like. The segment at Ser-174–Arg-198 is disordered.

Belongs to the endothelin/sarafotoxin family. Expressed in which included heart, lung, liver, kidney, spleen, stomach, pancreas, duodenum, colon, uterus, ovary and testis.

The protein localises to the secreted. Its function is as follows. Endothelins are endothelium-derived vasoconstrictor peptides. This chain is Endothelin-3 (EDN3), found in Canis lupus familiaris (Dog).